A 495-amino-acid polypeptide reads, in one-letter code: Aspartyl/glutamyl-tRNA(Asn/Gln) amidotransferase subunit B (495 aa).

Belongs to the GatB/GatE family. GatB subfamily. As to quaternary structure, heterotrimer of A, B and C subunits.

It catalyses the reaction L-glutamyl-tRNA(Gln) + L-glutamine + ATP + H2O = L-glutaminyl-tRNA(Gln) + L-glutamate + ADP + phosphate + H(+). The enzyme catalyses L-aspartyl-tRNA(Asn) + L-glutamine + ATP + H2O = L-asparaginyl-tRNA(Asn) + L-glutamate + ADP + phosphate + 2 H(+). In terms of biological role, allows the formation of correctly charged Asn-tRNA(Asn) or Gln-tRNA(Gln) through the transamidation of misacylated Asp-tRNA(Asn) or Glu-tRNA(Gln) in organisms which lack either or both of asparaginyl-tRNA or glutaminyl-tRNA synthetases. The reaction takes place in the presence of glutamine and ATP through an activated phospho-Asp-tRNA(Asn) or phospho-Glu-tRNA(Gln). The sequence is that of Aspartyl/glutamyl-tRNA(Asn/Gln) amidotransferase subunit B from Methanosarcina barkeri (strain Fusaro / DSM 804).